The primary structure comprises 357 residues: Probable protein phosphatase 2C 60 (357 aa).

The region spanning 23-329 (RYGLSSMQGW…DNMTMILVRF (307 aa)) is the PPM-type phosphatase domain. Mn(2+) is bound by residues Asp57, Gly58, Asp272, and Asp320. Residues 331–357 (NPTPSETELKPEASQAEGNHDEPSSSN) are disordered. Residues 348–357 (GNHDEPSSSN) are compositionally biased toward basic and acidic residues.

Belongs to the PP2C family. The cofactor is Mg(2+). Mn(2+) serves as cofactor.

It catalyses the reaction O-phospho-L-seryl-[protein] + H2O = L-seryl-[protein] + phosphate. The catalysed reaction is O-phospho-L-threonyl-[protein] + H2O = L-threonyl-[protein] + phosphate. The protein is Probable protein phosphatase 2C 60 of Arabidopsis thaliana (Mouse-ear cress).